The following is a 170-amino-acid chain: Acireductone dioxygenase (170 aa).

H99, H101, E105, and H144 together coordinate Fe(2+). Ni(2+) is bound by residues H99, H101, E105, and H144.

This sequence belongs to the acireductone dioxygenase (ARD) family. As to quaternary structure, monomer. It depends on Fe(2+) as a cofactor. Ni(2+) is required as a cofactor.

It carries out the reaction 1,2-dihydroxy-5-(methylsulfanyl)pent-1-en-3-one + O2 = 3-(methylsulfanyl)propanoate + CO + formate + 2 H(+). The catalysed reaction is 1,2-dihydroxy-5-(methylsulfanyl)pent-1-en-3-one + O2 = 4-methylsulfanyl-2-oxobutanoate + formate + 2 H(+). The protein operates within amino-acid biosynthesis; L-methionine biosynthesis via salvage pathway; L-methionine from S-methyl-5-thio-alpha-D-ribose 1-phosphate: step 5/6. Its function is as follows. Catalyzes 2 different reactions between oxygen and the acireductone 1,2-dihydroxy-3-keto-5-methylthiopentene (DHK-MTPene) depending upon the metal bound in the active site. Fe-containing acireductone dioxygenase (Fe-ARD) produces formate and 2-keto-4-methylthiobutyrate (KMTB), the alpha-ketoacid precursor of methionine in the methionine recycle pathway. Ni-containing acireductone dioxygenase (Ni-ARD) produces methylthiopropionate, carbon monoxide and formate, and does not lie on the methionine recycle pathway. The chain is Acireductone dioxygenase from Bacillus thuringiensis subsp. konkukian (strain 97-27).